Reading from the N-terminus, the 128-residue chain is Fluoride-specific ion channel FluC (128 aa).

Transmembrane regions (helical) follow at residues 4 to 24 (LILA…RYLI), 37 to 57 (PYGT…IMDI), 63 to 83 (LISG…LTTF), and 99 to 119 (ILMG…GVII). Na(+) is bound by residues Gly78 and Thr81.

It belongs to the fluoride channel Fluc/FEX (TC 1.A.43) family.

Its subcellular location is the cell membrane. It catalyses the reaction fluoride(in) = fluoride(out). Its activity is regulated as follows. Na(+) is not transported, but it plays an essential structural role and its presence is essential for fluoride channel function. Its function is as follows. Fluoride-specific ion channel. Important for reducing fluoride concentration in the cell, thus reducing its toxicity. This is Fluoride-specific ion channel FluC from Clostridium novyi (strain NT).